The primary structure comprises 177 residues: Putative adenylate kinase (177 aa).

Residues Gly10, Gly12, Lys13, Thr14, and Thr15 each coordinate ATP. The NMP stretch occupies residues 30–53 (DITEAVKKYKLYTEKDEDMDSYVI). The tract at residues 103 to 113 (KRGYKPKKVLE) is LID. Arg104 contacts ATP.

The protein belongs to the adenylate kinase family. AK6 subfamily. As to quaternary structure, interacts with uS11. Not a structural component of 40S pre-ribosomes, but transiently interacts with them by binding to uS11.

The catalysed reaction is AMP + ATP = 2 ADP. The enzyme catalyses ATP + H2O = ADP + phosphate + H(+). Broad-specificity nucleoside monophosphate (NMP) kinase that catalyzes the reversible transfer of the terminal phosphate group between nucleoside triphosphates and monophosphates. Also has ATPase activity. Involved in the late maturation steps of the 30S ribosomal particles, specifically 16S rRNA maturation. While NMP activity is not required for ribosome maturation, ATPase activity is. Associates transiently with small ribosomal subunit protein uS11. ATP hydrolysis breaks the interaction with uS11. May temporarily remove uS11 from the ribosome to enable a conformational change of the ribosomal RNA that is needed for the final maturation step of the small ribosomal subunit. The chain is Putative adenylate kinase from Methanocaldococcus jannaschii (strain ATCC 43067 / DSM 2661 / JAL-1 / JCM 10045 / NBRC 100440) (Methanococcus jannaschii).